A 555-amino-acid polypeptide reads, in one-letter code: Developmental regulatory protein wetA (555 aa).

Disordered stretches follow at residues 113-171 (TGHS…LMRS), 250-310 (QSPA…SESL), 419-488 (TQAV…RGGK), and 508-531 (GVAPSGSSKTKARREQEARDRRRK). Composition is skewed to polar residues over residues 162 to 171 (QSFSPGLMRS), 259 to 281 (PSANALAGQQQRYLSQTGTSALT), 293 to 310 (SPHSSDPQSMPSWHSESL), 419 to 431 (TQAVPHPSRSPSI), and 464 to 488 (SGQSTSTPKPVKTPNSLSTSPRGGK).

It belongs to the wetA family.

Its function is as follows. BrlA, abaA and wetA are pivotal regulators of conidiophore development and conidium maturation. They act individually and together to regulate their own expression and that of numerous other sporulation-specific genes. Responsible for activating a set of genes whose products make up the final two conidial wall layers or direct their assembly and, through this activity, is responsible for acquisition of spore dormancy. In Emericella nidulans (strain FGSC A4 / ATCC 38163 / CBS 112.46 / NRRL 194 / M139) (Aspergillus nidulans), this protein is Developmental regulatory protein wetA.